The sequence spans 402 residues: Tyrosine--tRNA ligase (402 aa).

Positions 48-57 (PSRPDLHLGH) match the 'HIGH' region motif. The 'KMSKS' region signature appears at 232–236 (KMSKS). Lys-235 is a binding site for ATP. One can recognise an S4 RNA-binding domain in the interval 339–402 (MPIIDLLTLL…KRKFFKIRSK (64 aa)).

Belongs to the class-I aminoacyl-tRNA synthetase family. TyrS type 2 subfamily. As to quaternary structure, homodimer.

Its subcellular location is the cytoplasm. The catalysed reaction is tRNA(Tyr) + L-tyrosine + ATP = L-tyrosyl-tRNA(Tyr) + AMP + diphosphate + H(+). Catalyzes the attachment of tyrosine to tRNA(Tyr) in a two-step reaction: tyrosine is first activated by ATP to form Tyr-AMP and then transferred to the acceptor end of tRNA(Tyr). This chain is Tyrosine--tRNA ligase, found in Chlorobium chlorochromatii (strain CaD3).